The sequence spans 304 residues: Calcium release-activated calcium channel protein 1 (304 aa).

Positions 1–11 (MHPEPAPPPSH) are enriched in pro residues. The interval 1–50 (MHPEPAPPPSHSNPELPVSGGSSTSGSRRSRRRSGDGEPSGAPPLPPPPP) is disordered. Over 1–89 (MHPEPAPPPS…KLYLSRAKLK (89 aa)) the chain is Cytoplasmic. A required for generation of inwardly rectifying CRAC currents region spans residues 3-49 (PEPAPPPSHSNPELPVSGGSSTSGSRRSRRRSGDGEPSGAPPLPPPP). Residues 12 to 27 (SNPELPVSGGSSTSGS) are compositionally biased toward low complexity. The segment at 39 to 61 (PSGAPPLPPPPPAVSYPDWIGQS) is AKAP5 association region. Pro residues predominate over residues 41-50 (GAPPLPPPPP). Residues 72–92 (SMQALSWRKLYLSRAKLKASS) form an interaction with STIM1 region. The helical transmembrane segment at 90–107 (ASSRTSALLSGFAMVAMV) threads the bilayer. Topologically, residues 108–121 (EVQLDTDHDYPPGL) are extracellular. A helical transmembrane segment spans residues 122-142 (LIVFSACTTVLVAVHLFALMI). Residues 143-175 (STCILPNIEAVSNVHNLNSVKESPHERMHRHIE) lie on the Cytoplasmic side of the membrane. Residues 176-196 (LAWAFSTVIGTLLFLAEVVLL) traverse the membrane as a helical segment. The Extracellular portion of the chain corresponds to 197-237 (CWVKFLPLKRQAGQPSPTKPPAESVIVANHSDSSGITPGEA). An N-linked (GlcNAc...) asparagine glycan is attached at Asn225. A helical membrane pass occupies residues 238-258 (AAIASTAIMVPCGLVFIVFAV). Topologically, residues 259 to 304 (HFYRSLVSHKTDRQFQELNELAEFARLQDQLDHRGDHSLTPGTHYA) are cytoplasmic. An interaction with STIM1 region spans residues 275-295 (ELNELAEFARLQDQLDHRGDH). Position 298 is a phosphothreonine (Thr298).

It belongs to the Orai family. Oligomerizes in homomeric and heteromeric ORAI complexes. Native CRAC channels most likely consist of hexameric ORAI heteromers, implying that diverse ORAI1, ORAI2 and ORAI3 subunit combinations with distinct biophysical properties can operate in a cell-type specific way. ARC channels are heteropentamers consisting of three ORAI1 and two ORAI3 subunits. Interacts with STIM1 and STIM2; this regulates channel activity. Interacts with CALM; this may displace STIM1 and STIM2 and might thereby modulate channel activity. Interacts (via N-terminus) with AKAP5 upon store depletion. Interacts with CRACR2A/EFCAB4B; the interaction is direct and takes place in absence of Ca(2+). Forms a complex with CRACR2A/EFCAB4B and STIM1 at low concentration of Ca(2+), the complex dissociates at elevated Ca(2+) concentrations. Interacts with ASPH (isoform 8). Interacts with SLC35G1. Interacts with UBQLN1. Interacts with ADCY8; interaction is calcium store depletion independent; interaction occurs in membrane raft; interaction increases markedly after store depletion; positively regulates SOCE-induced adenylate cyclase activity; contributes to the targeting of ADCY8 to discrete regions of the plasma membrane that are shielded from other calcium events. Interacts with EFHB; the interaction takes place upon Ca(2+)-store depletion. Interacts (via N- and C-termini) with ATP2C2 (via N-terminus); this interaction regulates Ca(2+) influx at the plasma membrane. Interacts with TSPAN18; this interaction regulates ORAI1 exit from the endoplasmic (ER), and/or Golgi, and trafficking to the cell surface. In terms of processing, N-glycosylated. N-glycosylation inhibits channel activity in T cells. Post-translationally, ubiquitinated. Cys-195 is oxidated, leading to inactivation of channel activity. In terms of tissue distribution, expressed in lactating mammary epithelium (at protein level).

Its subcellular location is the cell membrane. It is found in the basolateral cell membrane. It catalyses the reaction Ca(2+)(in) = Ca(2+)(out). With respect to regulation, oxidation at Cys-197 leads to inactivation of channel activity. Pore-forming subunit of two major inward rectifying Ca(2+) channels at the plasma membrane: Ca(2+) release-activated Ca(2+) (CRAC) channels and arachidonate-regulated Ca(2+)-selective (ARC) channels. Assembles with ORAI2 and ORAI3 to form hexameric CRAC channels that mediate Ca(2+) influx upon depletion of endoplasmic reticulum Ca(2+) store and channel activation by Ca(2+) sensor STIM1, a process known as store-operated Ca(2+) entry (SOCE). Various pore subunit combinations may account for distinct CRAC channel spatiotemporal and cell-type specific dynamics. ORAI1 mainly contributes to the generation of Ca(2+) plateaus involved in sustained Ca(2+) entry and is dispensable for cytosolic Ca(2+) oscillations, whereas ORAI2 and ORAI3 generate oscillatory patterns. CRAC channels assemble in Ca(2+) signaling microdomains where Ca(2+) influx is coupled to calmodulin and calcineurin signaling and activation of NFAT transcription factors recruited to ORAI1 via AKAP5. Activates NFATC2/NFAT1 and NFATC3/NFAT4-mediated transcriptional responses. CRAC channels are the main pathway for Ca(2+) influx in T cells and promote the immune response to pathogens by activating NFAT-dependent cytokine and chemokine transcription. Assembles with ORAI3 to form channels that mediate store-independent Ca(2+) influx in response to inflammatory metabolites arachidonate or its derivative leukotriene C4, termed ARC and LRC channels respectively. Plays a prominent role in Ca(2+) influx at the basolateral membrane of mammary epithelial cells independently of the Ca(2+) content of endoplasmic reticulum or Golgi stores. May mediate transepithelial transport of large quantities of Ca(2+) for milk secretion. The chain is Calcium release-activated calcium channel protein 1 (Orai1) from Mus musculus (Mouse).